Here is a 733-residue protein sequence, read N- to C-terminus: Sulfate transporter (733 aa).

Over residues 1–18 the composition is skewed to basic and acidic residues; the sequence is MSLKNEEQNDLSPKDSVK. The interval 1–37 is disordered; that stretch reads MSLKNEEQNDLSPKDSVKGNDQYRAPSGIHLEREEES. A phosphoserine mark is found at serine 12 and serine 16. Transmembrane regions (helical) follow at residues 113-133 and 138-158; these read VMSGLIVGILLVPQSIAYSLL and PIYGLYTSFFASLIYFILGTS. Asparagine 194 is a glycosylation site (N-linked (GlcNAc...) asparagine). 6 helical membrane passes run 214-234, 237-257, 379-399, 415-435, 453-473, and 519-539; these read IIVGSTVTFVAGVYQVAMGFF, GFVSVYLSDALLGGFVTGASF, IDAIAIAIIGFAITVSLSEMF, AIGFCNIIPSFFHCFTTSAAL, VMTALVLLLVLLVIAPLFFSL, and LISTEIGLLTGVCFSMFCVIL. One can recognise an STAS domain in the interval 563–714; the sequence is AYKNLQAKSG…SVYEAMTFAE (152 aa).

It belongs to the SLC26A/SulP transporter (TC 2.A.53) family. N-glycosylated.

It is found in the cell membrane. It localises to the apical cell membrane. It catalyses the reaction oxalate(in) + sulfate(out) = oxalate(out) + sulfate(in). The catalysed reaction is sulfate(out) + 2 chloride(in) = sulfate(in) + 2 chloride(out). It carries out the reaction oxalate(out) + 2 chloride(in) = oxalate(in) + 2 chloride(out). The enzyme catalyses bromide(in) + chloride(out) = bromide(out) + chloride(in). It catalyses the reaction nitrate(in) + chloride(out) = nitrate(out) + chloride(in). The catalysed reaction is iodide(in) + chloride(out) = iodide(out) + chloride(in). Its function is as follows. Sulfate transporter which mediates sulfate uptake into chondrocytes in order to maintain adequate sulfation of proteoglycans which is needed for cartilage development. Mediates electroneutral anion exchange of sulfate ions for oxalate ions, sulfate and oxalate ions for chloride and/or hydroxyl ions and chloride ions for bromide, iodide and nitrate ions. The coupling of sulfate transport to both hydroxyl and chloride ions likely serves to ensure transport at both acidic pH when most sulfate uptake is mediated by sulfate-hydroxide exchange and alkaline pH when most sulfate uptake is mediated by sulfate-chloride exchange. Essential for chondrocyte proliferation, differentiation and cell size expansion. The protein is Sulfate transporter (SLC26A2) of Bubalus bubalis (Domestic water buffalo).